The chain runs to 360 residues: Peptide chain release factor 1 (360 aa).

N5-methylglutamine is present on glutamine 235. The interval 285–311 (KRQQAQASERRNLLGSGDRSDRHRTYN) is disordered. The segment covering 292-308 (SERRNLLGSGDRSDRHR) has biased composition (basic and acidic residues).

It belongs to the prokaryotic/mitochondrial release factor family. Methylated by PrmC. Methylation increases the termination efficiency of RF1.

Its subcellular location is the cytoplasm. Peptide chain release factor 1 directs the termination of translation in response to the peptide chain termination codons UAG and UAA. In Hamiltonella defensa subsp. Acyrthosiphon pisum (strain 5AT), this protein is Peptide chain release factor 1.